Consider the following 750-residue polypeptide: Photosystem I P700 chlorophyll a apoprotein A1 (750 aa).

A run of 8 helical transmembrane segments spans residues 70 to 93 (IFSAHFGQLSIIFLWLSGMYFHGA), 156 to 179 (LYCTAIGGLVFAALMLFAGWFHYH), 195 to 219 (LNHHLAGLLGLGSLSWAGHQVHVSL), 291 to 309 (IAHHHLAIAILFLIAGHMY), 346 to 369 (WHAQLSINLAMLGSLTIIVAHHMY), 385 to 411 (LSLFTHHMWIGGFLIVGAAAHAAIFMV), 433 to 455 (AIISHLNWVCIFLGFHSFGLYIH), and 531 to 549 (FLVHHIHAFTIHVTVLILL). [4Fe-4S] cluster contacts are provided by Cys-573 and Cys-582. Helical transmembrane passes span 589–610 (HVFLGLFWMYNAISVVIFHFSW) and 664–686 (LSAYGLFFLGAHFVWAFSLMFLF). His-675 is a binding site for chlorophyll a'. Chlorophyll a contacts are provided by Met-683 and Tyr-691. Trp-692 lines the phylloquinone pocket. The chain crosses the membrane as a helical span at residues 724 to 744 (AVGVTHYLLGGIATTWAFFLA).

It belongs to the PsaA/PsaB family. In terms of assembly, the PsaA/B heterodimer binds the P700 chlorophyll special pair and subsequent electron acceptors. PSI consists of a core antenna complex that captures photons, and an electron transfer chain that converts photonic excitation into a charge separation. The eukaryotic PSI reaction center is composed of at least 11 subunits. P700 is a chlorophyll a/chlorophyll a' dimer, A0 is one or more chlorophyll a, A1 is one or both phylloquinones and FX is a shared 4Fe-4S iron-sulfur center. serves as cofactor.

Its subcellular location is the plastid. It is found in the chloroplast thylakoid membrane. It carries out the reaction reduced [plastocyanin] + hnu + oxidized [2Fe-2S]-[ferredoxin] = oxidized [plastocyanin] + reduced [2Fe-2S]-[ferredoxin]. In terms of biological role, psaA and PsaB bind P700, the primary electron donor of photosystem I (PSI), as well as the electron acceptors A0, A1 and FX. PSI is a plastocyanin-ferredoxin oxidoreductase, converting photonic excitation into a charge separation, which transfers an electron from the donor P700 chlorophyll pair to the spectroscopically characterized acceptors A0, A1, FX, FA and FB in turn. Oxidized P700 is reduced on the lumenal side of the thylakoid membrane by plastocyanin. The polypeptide is Photosystem I P700 chlorophyll a apoprotein A1 (Lotus japonicus (Lotus corniculatus var. japonicus)).